Reading from the N-terminus, the 160-residue chain is Transcription elongation factor GreA (160 aa).

It belongs to the GreA/GreB family.

Functionally, necessary for efficient RNA polymerase transcription elongation past template-encoded arresting sites. The arresting sites in DNA have the property of trapping a certain fraction of elongating RNA polymerases that pass through, resulting in locked ternary complexes. Cleavage of the nascent transcript by cleavage factors such as GreA or GreB allows the resumption of elongation from the new 3'terminus. GreA releases sequences of 2 to 3 nucleotides. This chain is Transcription elongation factor GreA, found in Francisella tularensis subsp. tularensis (strain FSC 198).